We begin with the raw amino-acid sequence, 324 residues long: NADH-quinone oxidoreductase subunit H 2 (324 aa).

9 helical membrane passes run 1–21 (MIGM…LLVV), 77–97 (ILAP…VAFG), 109–129 (VMFL…GALA), 147–167 (LGYE…AGSL), 179–199 (VWFV…GVAA), 214–234 (LVAG…FLGE), 238–258 (VLLV…GPVW), 263–283 (LPGP…FIWI), and 298–318 (FAWK…GLIV).

The protein belongs to the complex I subunit 1 family. As to quaternary structure, NDH-1 is composed of 14 different subunits. Subunits NuoA, H, J, K, L, M, N constitute the membrane sector of the complex.

It is found in the cell inner membrane. The catalysed reaction is a quinone + NADH + 5 H(+)(in) = a quinol + NAD(+) + 4 H(+)(out). NDH-1 shuttles electrons from NADH, via FMN and iron-sulfur (Fe-S) centers, to quinones in the respiratory chain. The immediate electron acceptor for the enzyme in this species is believed to be ubiquinone. Couples the redox reaction to proton translocation (for every two electrons transferred, four hydrogen ions are translocated across the cytoplasmic membrane), and thus conserves the redox energy in a proton gradient. This subunit may bind ubiquinone. The chain is NADH-quinone oxidoreductase subunit H 2 from Rhodopseudomonas palustris (strain BisB18).